Reading from the N-terminus, the 185-residue chain is Ribosome-recycling factor (185 aa).

The protein belongs to the RRF family.

Its subcellular location is the cytoplasm. Its function is as follows. Responsible for the release of ribosomes from messenger RNA at the termination of protein biosynthesis. May increase the efficiency of translation by recycling ribosomes from one round of translation to another. The protein is Ribosome-recycling factor of Exiguobacterium sibiricum (strain DSM 17290 / CCUG 55495 / CIP 109462 / JCM 13490 / 255-15).